Consider the following 185-residue polypeptide: NADH-dependent FMN reductase AsuE2 (185 aa).

The segment covering 1 to 13 has biased composition (low complexity); the sequence is MSTHTARRAGATA. The tract at residues 1-24 is disordered; sequence MSTHTARRAGATAGHDRDRGTEPG. Basic and acidic residues predominate over residues 14–24; sequence GHDRDRGTEPG.

The protein belongs to the non-flavoprotein flavin reductase family. In terms of assembly, does not interact with AsuE1, suggesting a possible transient interaction between the two enzymes instead of formation of a stable complex.

It catalyses the reaction FMNH2 + NAD(+) = FMN + NADH + 2 H(+). Its pathway is antibiotic biosynthesis. Its function is as follows. Involved in the biosynthesis of the antibiotic asukamycin. When flavin concentration is low, AsuE2 assists the protoasukamycin 4-monooxygenase AsuE1 by providing a reduced form of flavin, enhancing AsuE1 activity. This is NADH-dependent FMN reductase AsuE2 from Streptomyces nodosus subsp. asukaensis.